Reading from the N-terminus, the 67-residue chain is ORF2p protein (67 aa).

Positions W13–V18 are important for viral replication in intestinal cells. A transmembrane helix spans residues A22–V38.

The protein resides in the host cytoplasmic vesicle membrane. In terms of biological role, facilitates virus release from intestinal cells in vitro, possibly through the host autophagic pathway. This chain is ORF2p protein, found in Homo sapiens (Human).